We begin with the raw amino-acid sequence, 130 residues long: C-X-C motif chemokine 5 (130 aa).

An N-terminal signal peptide occupies residues 1–37; sequence MSFQLRSSARIPSRSCSSFTLLAFLLLFTLPQHRAQA. 2 disulfides stabilise this stretch: cysteine 50–cysteine 76 and cysteine 52–cysteine 93.

This sequence belongs to the intercrine alpha (chemokine CxC) family. In terms of assembly, monomer. Homodimer.

Its subcellular location is the secreted. Its function is as follows. May participate in the recruitment of inflammatory cells by injured or infected tissue. This chain is C-X-C motif chemokine 5 (Cxcl5), found in Rattus norvegicus (Rat).